The primary structure comprises 478 residues: Ribulose bisphosphate carboxylase large chain (478 aa).

The propeptide occupies 1-2 (MS). N-acetylproline is present on Pro-3. Residue Lys-14 is modified to N6,N6,N6-trimethyllysine. Residues Asn-123 and Thr-173 each contribute to the substrate site. Residue Lys-175 is the Proton acceptor of the active site. Lys-177 contributes to the substrate binding site. Residues Lys-201, Asp-203, and Glu-204 each contribute to the Mg(2+) site. Lys-201 is subject to N6-carboxylysine. The active-site Proton acceptor is His-294. Substrate is bound by residues Arg-295, His-327, and Ser-379.

The protein belongs to the RuBisCO large chain family. Type I subfamily. In terms of assembly, heterohexadecamer of 8 large chains and 8 small chains; disulfide-linked. The disulfide link is formed within the large subunit homodimers. The cofactor is Mg(2+). The disulfide bond which can form in the large chain dimeric partners within the hexadecamer appears to be associated with oxidative stress and protein turnover.

It is found in the plastid. Its subcellular location is the chloroplast. The enzyme catalyses 2 (2R)-3-phosphoglycerate + 2 H(+) = D-ribulose 1,5-bisphosphate + CO2 + H2O. It carries out the reaction D-ribulose 1,5-bisphosphate + O2 = 2-phosphoglycolate + (2R)-3-phosphoglycerate + 2 H(+). Its function is as follows. RuBisCO catalyzes two reactions: the carboxylation of D-ribulose 1,5-bisphosphate, the primary event in carbon dioxide fixation, as well as the oxidative fragmentation of the pentose substrate in the photorespiration process. Both reactions occur simultaneously and in competition at the same active site. In Lemna minor (Common duckweed), this protein is Ribulose bisphosphate carboxylase large chain.